Consider the following 349-residue polypeptide: Cytoplasmic tRNA 2-thiolation protein 2 (349 aa).

The protein belongs to the CTU2/NCS2 family.

It localises to the cytoplasm. It functions in the pathway tRNA modification; 5-methoxycarbonylmethyl-2-thiouridine-tRNA biosynthesis. Plays a central role in 2-thiolation of mcm(5)S(2)U at tRNA wobble positions of tRNA(Lys), tRNA(Glu) and tRNA(Gln). May act by forming a heterodimer with tut-1/ctu-1 that ligates sulfur from thiocarboxylated urm-1 onto the uridine of tRNAs at wobble position. The chain is Cytoplasmic tRNA 2-thiolation protein 2 from Caenorhabditis briggsae.